The sequence spans 241 residues: Small ribosomal subunit protein uS5 (241 aa).

The interval 1–53 is disordered; that stretch reads MSDNEKETQVAEETQNTQAAAESNNEDRKSRRGQRGEGRRGERRNRREESHEN. Residues 11–22 are compositionally biased toward low complexity; it reads AEETQNTQAAAE. Positions 25–53 are enriched in basic and acidic residues; sequence NEDRKSRRGQRGEGRRGERRNRREESHEN. One can recognise an S5 DRBM domain in the interval 55–118; the sequence is MLDRVVTINR…LDAKKHMFTV (64 aa).

It belongs to the universal ribosomal protein uS5 family. Part of the 30S ribosomal subunit. Contacts proteins S4 and S8.

Its function is as follows. With S4 and S12 plays an important role in translational accuracy. In terms of biological role, located at the back of the 30S subunit body where it stabilizes the conformation of the head with respect to the body. This chain is Small ribosomal subunit protein uS5, found in Bifidobacterium adolescentis (strain ATCC 15703 / DSM 20083 / NCTC 11814 / E194a).